Reading from the N-terminus, the 283-residue chain is MTNIQTWIDEYHKGSRFGLNGDVLIKQKSQYQEIIVIENEYYGRALMLDGCWMTSLKDEKYYHECLVHPALSSIDEKSNVLIIGGGDGGTVRECVKYAQISKIDLVEIDEEVIKISKKFLKEIGGEAWHDKRLEIHVDDGVKWVKKTRDNYYDVIFIDCSDPSEFSNLLFSDSFYKECKRILTPKGILATQSESPESFKNIHINILKTLKNIFKVSETMYSFVPIYPSGIWSWTFASSEDLNLSKQNYDEILKIEKGCEIWNLNFQNAAFKMMPNKIIKELDS.

One can recognise a PABS domain in the interval 5-238 (QTWIDEYHKG…GIWSWTFASS (234 aa)). Glutamine 32 contributes to the S-methyl-5'-thioadenosine binding site. Spermidine contacts are provided by histidine 63 and aspartate 87. S-methyl-5'-thioadenosine is bound by residues glutamate 107 and 139–140 (DG). Aspartate 158 serves as the catalytic Proton acceptor. Position 158 to 161 (158 to 161 (DCSD)) interacts with spermidine.

The protein belongs to the spermidine/spermine synthase family. As to quaternary structure, homodimer or homotetramer.

The protein resides in the cytoplasm. It catalyses the reaction S-adenosyl 3-(methylsulfanyl)propylamine + putrescine = S-methyl-5'-thioadenosine + spermidine + H(+). The protein operates within amine and polyamine biosynthesis; spermidine biosynthesis; spermidine from putrescine: step 1/1. In terms of biological role, catalyzes the irreversible transfer of a propylamine group from the amino donor S-adenosylmethioninamine (decarboxy-AdoMet) to putrescine (1,4-diaminobutane) to yield spermidine. In Prochlorococcus marinus (strain MIT 9301), this protein is Polyamine aminopropyltransferase.